We begin with the raw amino-acid sequence, 838 residues long: Protein translocase subunit SecA (838 aa).

Residues Q87, 105-109, and D494 each bind ATP; that span reads GEGKT. Composition is skewed to basic and acidic residues over residues 781-790 and 803-819; these read EQEFQHKDET and EDAK…KVGR. The disordered stretch occupies residues 781–838; sequence EQEFQHKDETANVQYSGPAESAEDAKKEPKRREAPKVGRNDPCPCGSGKKYKKCHGAK. 4 residues coordinate Zn(2+): C823, C825, C834, and H835. Basic residues predominate over residues 829-838; sequence KKYKKCHGAK.

It belongs to the SecA family. In terms of assembly, monomer and homodimer. Part of the essential Sec protein translocation apparatus which comprises SecA, SecYEG and auxiliary proteins SecDF-YajC and YidC. It depends on Zn(2+) as a cofactor.

It localises to the cell inner membrane. The protein localises to the cytoplasm. The catalysed reaction is ATP + H2O + cellular proteinSide 1 = ADP + phosphate + cellular proteinSide 2.. Part of the Sec protein translocase complex. Interacts with the SecYEG preprotein conducting channel. Has a central role in coupling the hydrolysis of ATP to the transfer of proteins into and across the cell membrane, serving as an ATP-driven molecular motor driving the stepwise translocation of polypeptide chains across the membrane. This chain is Protein translocase subunit SecA, found in Solidesulfovibrio magneticus (strain ATCC 700980 / DSM 13731 / RS-1) (Desulfovibrio magneticus).